Reading from the N-terminus, the 186-residue chain is Adenylate kinase isoenzyme 6 homolog (186 aa).

Residues G15, G17, K18, S19, and T20 each coordinate ATP. The NMPbind stretch occupies residues 48–71; it reads NLSNIIKDERLYKEFDDELDASIY. Residues 126–136 are LID; the sequence is KRNYTKEKIKN. R127 is an ATP binding site.

It belongs to the adenylate kinase family. AK6 subfamily. Monomer and homodimer. Interacts with small ribosomal subunit protein uS11. Not a structural component of 43S pre-ribosomes, but transiently interacts with them by binding to uS11.

It is found in the cytoplasm. The protein localises to the nucleus. It carries out the reaction AMP + ATP = 2 ADP. The catalysed reaction is ATP + H2O = ADP + phosphate + H(+). In terms of biological role, broad-specificity nucleoside monophosphate (NMP) kinase that catalyzes the reversible transfer of the terminal phosphate group between nucleoside triphosphates and monophosphates. Also has ATPase activity. Involved in the late cytoplasmic maturation steps of the 40S ribosomal particles, specifically 18S rRNA maturation. While NMP activity is not required for ribosome maturation, ATPase activity is. Associates transiently with small ribosomal subunit protein uS11. ATP hydrolysis breaks the interaction with uS11. May temporarily remove uS11 from the ribosome to enable a conformational change of the ribosomal RNA that is needed for the final maturation step of the small ribosomal subunit. Its NMP activity may have a role in nuclear energy homeostasis. This chain is Adenylate kinase isoenzyme 6 homolog, found in Plasmodium falciparum (isolate 3D7).